Here is a 532-residue protein sequence, read N- to C-terminus: CTP synthase (532 aa).

An amidoligase domain region spans residues 1-269 (MNQASTRFIF…DTQILNHFNI (269 aa)). CTP is bound at residue Ser-17. UTP is bound at residue Ser-17. Residues 18 to 23 (SLGKGL) and Asp-75 each bind ATP. The Mg(2+) site is built by Asp-75 and Glu-143. Residues 150–152 (DIE), 190–195 (KTKPTQ), and Lys-226 each bind CTP. UTP-binding positions include 190–195 (KTKPTQ) and Lys-226. Residues 294 to 532 (NVAIIGKYIK…FISFIKASLD (239 aa)) enclose the Glutamine amidotransferase type-1 domain. Gly-355 is an L-glutamine binding site. Cys-382 acts as the Nucleophile; for glutamine hydrolysis in catalysis. L-glutamine is bound by residues 383–386 (MGMQ), Glu-406, and Arg-462. Catalysis depends on residues His-509 and Glu-511.

It belongs to the CTP synthase family. In terms of assembly, homotetramer.

It carries out the reaction UTP + L-glutamine + ATP + H2O = CTP + L-glutamate + ADP + phosphate + 2 H(+). It catalyses the reaction L-glutamine + H2O = L-glutamate + NH4(+). The catalysed reaction is UTP + NH4(+) + ATP = CTP + ADP + phosphate + 2 H(+). The protein operates within pyrimidine metabolism; CTP biosynthesis via de novo pathway; CTP from UDP: step 2/2. Its activity is regulated as follows. Allosterically activated by GTP, when glutamine is the substrate; GTP has no effect on the reaction when ammonia is the substrate. The allosteric effector GTP functions by stabilizing the protein conformation that binds the tetrahedral intermediate(s) formed during glutamine hydrolysis. Inhibited by the product CTP, via allosteric rather than competitive inhibition. Its function is as follows. Catalyzes the ATP-dependent amination of UTP to CTP with either L-glutamine or ammonia as the source of nitrogen. Regulates intracellular CTP levels through interactions with the four ribonucleotide triphosphates. The sequence is that of CTP synthase from Ehrlichia chaffeensis (strain ATCC CRL-10679 / Arkansas).